The sequence spans 413 residues: Floricaula/leafy homolog 1 (413 aa).

Disordered stretches follow at residues 154–177 (EGLS…GGTT) and 191–239 (QRRR…RQRE). Positions 201-210 (GRERRGRASA) are enriched in basic and acidic residues. Acidic residues predominate over residues 211–225 (EEDEETEEGQEDEWN). DNA-binding regions lie at residues 238-242 (REHPF), 307-314 (NKPKMRHY), and 378-381 (YVPT).

Belongs to the FLO/LFY family. As to expression, expressed in floral meristems and in indeterminate vegetative meristems.

The protein localises to the nucleus. Probable transcription factor that act to specify determinacy in the progenitor cells for both flowers and leaves. The protein is Floricaula/leafy homolog 1 (FL1) of Nicotiana tabacum (Common tobacco).